The primary structure comprises 201 residues: Large ribosomal subunit protein uL4 (201 aa).

The interval 44–71 (RAQKTRAEVTGSGKKPWRQKGTGRARSG) is disordered.

The protein belongs to the universal ribosomal protein uL4 family. Part of the 50S ribosomal subunit.

In terms of biological role, one of the primary rRNA binding proteins, this protein initially binds near the 5'-end of the 23S rRNA. It is important during the early stages of 50S assembly. It makes multiple contacts with different domains of the 23S rRNA in the assembled 50S subunit and ribosome. Functionally, forms part of the polypeptide exit tunnel. This Enterobacter sp. (strain 638) protein is Large ribosomal subunit protein uL4.